Consider the following 73-residue polypeptide: Antitoxin VapB2 (73 aa).

Forms a homodimer, which binds to a toxin homodimer, which then oligomerizes further to a hetero-octamer. When bound to toxin VapC2 the toxin activity is inhibited; 1 antitoxin may suffice to inhibit toxin.

Functionally, antitoxin component of a type II toxin-antitoxin (TA) system. Upon expression in M.smegmatis neutralizes the effect of cognate toxin VapC2. The C-terminal helix of the antitoxin may obstruct the toxin's RNA-binding groove, blocking access to the active sites. Additionally, the C-terminal arginine of the antitoxin may remove Mg(2+) ions from the toxin active sites. The sequence is that of Antitoxin VapB2 (vapB2) from Mycobacterium tuberculosis (strain ATCC 25618 / H37Rv).